We begin with the raw amino-acid sequence, 363 residues long: Protein MAK32 (363 aa).

This sequence to S.pombe SpAC4G8.14c.

Necessary for the structural stability of L-A double-stranded RNA-containing particles. Necessary for growth at 37 degrees Celsius as well as for maintenance of the killer plasmid. The chain is Protein MAK32 (MAK32) from Saccharomyces cerevisiae (strain ATCC 204508 / S288c) (Baker's yeast).